The sequence spans 284 residues: Tropomyosin alpha-1 chain (284 aa).

Met-1 is modified (N-acetylmethionine). The tract at residues 1–38 (MDAIKKKMQMLKLDKENALDRAEQAEADKKAAEDRSKQ) is disordered. A coiled-coil region spans residues 1–284 (MDAIKKKMQM…DHALNDMTSI (284 aa)). Over residues 12–38 (KLDKENALDRAEQAEADKKAAEDRSKQ) the composition is skewed to basic and acidic residues. Phosphoserine is present on residues Ala-31, Ser-45, and Lys-51. The segment at 116 to 136 (AEKAADESERGMKVIESRAQK) is disordered. Residues Ser-174, Ser-186, and Ser-206 each carry the phosphoserine modification. Position 213 is an N6-acetyllysine (Lys-213). Ser-252 bears the Phosphoserine mark. A Phosphotyrosine modification is found at Tyr-261. A Phosphoserine modification is found at Ser-271. Ser-283 carries the phosphoserine; by DAPK1 modification.

It belongs to the tropomyosin family. In terms of assembly, homodimer. Heterodimer of an alpha (TPM1, TPM3 or TPM4) and a beta (TPM2) chain. Interacts with HRG (via the HRR domain); the interaction contributes to the antiangiogenic properties of the histidine/proline-rich region (HRR) of HRG. Interacts (via N-terminus) with LMOD2 (via N-terminus) and TMOD1 (via N-terminus). Phosphorylated at Ser-283 by DAPK1 in response to oxidative stress and this phosphorylation enhances stress fiber formation in endothelial cells. As to expression, detected in primary breast cancer tissues but undetectable in normal breast tissues in Sudanese patients. Isoform 1 is expressed in adult and fetal skeletal muscle and cardiac tissues, with higher expression levels in the cardiac tissues. Isoform 10 is expressed in adult and fetal cardiac tissues, but not in skeletal muscle.

It localises to the cytoplasm. Its subcellular location is the cytoskeleton. Functionally, binds to actin filaments in muscle and non-muscle cells. Plays a central role, in association with the troponin complex, in the calcium dependent regulation of vertebrate striated muscle contraction. Smooth muscle contraction is regulated by interaction with caldesmon. In non-muscle cells is implicated in stabilizing cytoskeleton actin filaments. The polypeptide is Tropomyosin alpha-1 chain (TPM1) (Homo sapiens (Human)).